Consider the following 631-residue polypeptide: MSDLEKKYSKLIEGIITHLGDRKSLSFSELSNLLPDDILEPEILDCICSVLEDRGIRLVNKISELDLVVSEDGNDEEEEVEIESDRNFMILDDGFQSDEEDIDIDVKLDDCDEEDISVKDDLGSGYIKGNVLKDSHSEDPIKLYLKEIGKEFLLTGNQEVELAKQMDSGESIIENILKNEGLVIENYYNLVNTIYSRMEREEFFKREKDKDKESSPDYYNKKKRIASFYKIPLKPIQDRLISYVDNKHRVYDLGGDIFEKNLKKERLALKELLRDIPLYQEELRIFSDDYIDSANKIKDLQRQQRIILSRLKIEKIRDLRVLGRDLTIAEKKIEIEKSLKLKEDAIKEQITEAQLAQKELERIEMYYEYPTDKIISMSEEIAKGKQMMQHAKDQLIKANLRLVVSIAKKYANRGLHFFDLVQEGNIGLIKAVEKFEYKRGFKFSTYATWWIRQAITRSISDQARTIRVPVHMIEQINRLNRETRYLIQVLGKDPTDEELSDRLGWELKKVKTVKSVSREPVSLETPIGEEEDSVLSDFIEDKAIKNPANHTSFVVLQDQIRAILGTLPEREQEVVKMRFGLEDGYSLTLEEVGLHFNVTRERIRQIESKALRRLKNPKKTQKLKDYLEDLN.

The sigma-70 factor domain-2 stretch occupies residues 395-465 (LIKANLRLVV…TRSISDQART (71 aa)). The Interaction with polymerase core subunit RpoC motif lies at 419–422 (DLVQ). The segment at 474 to 550 (EQINRLNRET…DKAIKNPANH (77 aa)) is sigma-70 factor domain-3. The tract at residues 563-616 (ILGTLPEREQEVVKMRFGLEDGYSLTLEEVGLHFNVTRERIRQIESKALRRLKN) is sigma-70 factor domain-4. The segment at residues 589–608 (LEEVGLHFNVTRERIRQIES) is a DNA-binding region (H-T-H motif).

The protein belongs to the sigma-70 factor family. RpoD/SigA subfamily. As to quaternary structure, interacts transiently with the RNA polymerase catalytic core.

Its subcellular location is the cytoplasm. Functionally, sigma factors are initiation factors that promote the attachment of RNA polymerase to specific initiation sites and are then released. This sigma factor is the primary sigma factor during exponential growth. The protein is RNA polymerase sigma factor RpoD of Borreliella burgdorferi (strain ATCC 35210 / DSM 4680 / CIP 102532 / B31) (Borrelia burgdorferi).